A 178-amino-acid polypeptide reads, in one-letter code: Protein GrpE (178 aa).

Basic and acidic residues predominate over residues 1–11 (MADELSEKSVE). The interval 1-32 (MADELSEKSVEGTEEDGESAPAEGTTEGVPVD) is disordered.

This sequence belongs to the GrpE family. In terms of assembly, homodimer.

It localises to the cytoplasm. Participates actively in the response to hyperosmotic and heat shock by preventing the aggregation of stress-denatured proteins, in association with DnaK and GrpE. It is the nucleotide exchange factor for DnaK and may function as a thermosensor. Unfolded proteins bind initially to DnaJ; upon interaction with the DnaJ-bound protein, DnaK hydrolyzes its bound ATP, resulting in the formation of a stable complex. GrpE releases ADP from DnaK; ATP binding to DnaK triggers the release of the substrate protein, thus completing the reaction cycle. Several rounds of ATP-dependent interactions between DnaJ, DnaK and GrpE are required for fully efficient folding. In Methanothrix thermoacetophila (strain DSM 6194 / JCM 14653 / NBRC 101360 / PT) (Methanosaeta thermophila), this protein is Protein GrpE.